The sequence spans 335 residues: Pyridoxal 5'-phosphate synthase subunit PdxS (335 aa).

A D-ribose 5-phosphate-binding site is contributed by Asp-30. The active-site Schiff-base intermediate with D-ribose 5-phosphate is Lys-87. D-ribose 5-phosphate is bound at residue Gly-159. Arg-171 is a D-glyceraldehyde 3-phosphate binding site. Residues Gly-257 and 278-279 each bind D-ribose 5-phosphate; that span reads GS.

This sequence belongs to the PdxS/SNZ family. In the presence of PdxT, forms a dodecamer of heterodimers.

The catalysed reaction is aldehydo-D-ribose 5-phosphate + D-glyceraldehyde 3-phosphate + L-glutamine = pyridoxal 5'-phosphate + L-glutamate + phosphate + 3 H2O + H(+). It participates in cofactor biosynthesis; pyridoxal 5'-phosphate biosynthesis. Catalyzes the formation of pyridoxal 5'-phosphate from ribose 5-phosphate (RBP), glyceraldehyde 3-phosphate (G3P) and ammonia. The ammonia is provided by the PdxT subunit. Can also use ribulose 5-phosphate and dihydroxyacetone phosphate as substrates, resulting from enzyme-catalyzed isomerization of RBP and G3P, respectively. The polypeptide is Pyridoxal 5'-phosphate synthase subunit PdxS (Thermococcus onnurineus (strain NA1)).